The primary structure comprises 257 residues: Ribosome-inactivating protein charybdin (257 aa).

Glu-167 is a catalytic residue. Cysteines 217 and 254 form a disulfide.

Belongs to the ribosome-inactivating protein family. Type 1 RIP subfamily.

The catalysed reaction is Endohydrolysis of the N-glycosidic bond at one specific adenosine on the 28S rRNA.. Its function is as follows. Inhibits translation in rabbit reticulocytes. In Drimia maritima (Sea squill), this protein is Ribosome-inactivating protein charybdin.